Consider the following 530-residue polypeptide: Autoinducer-2 kinase (530 aa).

Belongs to the FGGY kinase family.

It localises to the cytoplasm. The enzyme catalyses (S)-4,5-dihydroxypentane-2,3-dione + ATP = (2S)-2-hydroxy-3,4-dioxopentyl phosphate + ADP + H(+). In terms of biological role, catalyzes the phosphorylation of autoinducer-2 (AI-2) to phospho-AI-2, which subsequently inactivates the transcriptional regulator LsrR and leads to the transcription of the lsr operon. Phosphorylates the ring-open form of (S)-4,5-dihydroxypentane-2,3-dione (DPD), which is the precursor to all AI-2 signaling molecules, at the C5 position. The polypeptide is Autoinducer-2 kinase (Enterobacter sp. (strain 638)).